A 176-amino-acid chain; its full sequence is NADH:riboflavin 5'-phosphate oxidoreductase (176 aa).

In terms of biological role, provides the reduced form of flavin mononucleotide for the PIIA synthase reaction. The sequence is that of NADH:riboflavin 5'-phosphate oxidoreductase (snaC) from Streptomyces pristinaespiralis.